Consider the following 255-residue polypeptide: uncharacterized protein (255 aa).

A disordered region spans residues 42–67; sequence ACSGSPPEPGKGRPDTTPEQEVPVTA.

This is an uncharacterized protein from Mycobacterium tuberculosis (strain CDC 1551 / Oshkosh).